The following is a 96-amino-acid chain: uncharacterized protein (96 aa).

The first 30 residues, 1–30 (MLILSVFCAVFYAFLTAIVANFSLKTLAIG), serve as a signal peptide directing secretion. At 31–54 (ATFVKSHLKSNPIPYGDLVADSLD) the chain is on the extracellular side. The helical transmembrane segment at 55–75 (FGNITPTVTLLFAILIAVLAL) threads the bilayer. Topologically, residues 76–96 (KCEFSCSTSAPAGQASGRKVK) are cytoplasmic.

Its subcellular location is the membrane. This is an uncharacterized protein from Dictyostelium discoideum (Social amoeba).